A 277-amino-acid chain; its full sequence is Putative phosphoenolpyruvate synthase regulatory protein (277 aa).

An ADP-binding site is contributed by 157–164 (GVSRCGKT).

The protein belongs to the pyruvate, phosphate/water dikinase regulatory protein family. PSRP subfamily.

The catalysed reaction is [pyruvate, water dikinase] + ADP = [pyruvate, water dikinase]-phosphate + AMP + H(+). It carries out the reaction [pyruvate, water dikinase]-phosphate + phosphate + H(+) = [pyruvate, water dikinase] + diphosphate. Bifunctional serine/threonine kinase and phosphorylase involved in the regulation of the phosphoenolpyruvate synthase (PEPS) by catalyzing its phosphorylation/dephosphorylation. The protein is Putative phosphoenolpyruvate synthase regulatory protein of Enterobacter sp. (strain 638).